A 296-amino-acid chain; its full sequence is ADP-forming sulfoacetate-CoA ligase subunit SqwL (296 aa).

CoA is bound by residues Thr17–Glu20, Lys43, and Ile96–Asp98. His251 serves as the catalytic Tele-phosphohistidine intermediate.

The protein belongs to the succinate/malate CoA ligase alpha subunit family. Forms a complex with SqwK.

It carries out the reaction sulfoacetate + ATP + CoA = sulfoacetyl-CoA + ADP + phosphate. Part of a variant of the sulfo-TK pathway, a D-sulfoquinovose degradation pathway that produces sulfoacetate. Hydrolyzes sulfoacetyl-coenzyme A (sulfoacetyl-CoA) to produce sulfoacetate and CoA coupled with the phosphorylation of ADP to generate ATP. Cannot use succinate, acetate or 3-hydroxypropionate, and shows only residual activities with malonate and 3-sulfopropanoate. The protein is ADP-forming sulfoacetate-CoA ligase subunit SqwL of Acholeplasma sp.